A 413-amino-acid chain; its full sequence is Cyclic AMP-dependent transcription factor ATF-7 (413 aa).

Positions 1-285 (MGDDRPFVCS…GMVVGTASTM (285 aa)) are transactivation domain. The C2H2-type zinc finger occupies 7–31 (FVCSAPGCGQRFTNEDHLAVHKHKH). The residue at position 51 (Thr51) is a Phosphothreonine; by MAPK11. Thr53 and Thr101 each carry phosphothreonine. Disordered stretches follow at residues 81–140 (ASDD…TTKP) and 299–337 (HPDA…RRQR). Residue Lys107 forms a Glycyl lysine isopeptide (Lys-Gly) (interchain with G-Cter in SUMO1) linkage. Composition is skewed to low complexity over residues 114–126 (VDSS…ASSP) and 307–320 (QPQV…PSTG). Basic and acidic residues predominate over residues 326 to 337 (TVDEDPDERRQR). The 64-residue stretch at 332 to 395 (DERRQRFLER…AQLKQLLLAH (64 aa)) folds into the bZIP domain. The basic motif stretch occupies residues 334 to 354 (RRQRFLERNRAAASRCRQKRK). Positions 360–388 (LEKKAEELTSQNIQLSNEVTLLRNEVAQL) are leucine-zipper.

Belongs to the bZIP family. As to quaternary structure, homodimer; binds DNA as homodimer. Heterodimer; heterodimerizes with other members of ATF family and with JUN family members. Interacts with JNK2; the interaction does not phosphorylate ATF7 but acts as a docking site for other ATF-associated partners such as JUN family members. Interacts (via its transactivation domain) with TAF12 the interaction potentiates the transactivation activity and is inhibited by ATF7 sumoylation. Interacts with TAF4; the interaction inhibits the TAF12-dependent transactivation. Interacts with MAPK9; the interaction does not phosphorylate ATF7 but acts as a docking site for ATF7-associated partners such as JUN. Interacts with Ku complex components XRCC6 and XRCC7. Interacts with TERT. In terms of processing, on EGF stimulation, phosphorylated first on Thr-53 allowing subsequent phosphorylation on Thr-51. This latter phosphorylation prevents sumoylation, increases binding to TAF12 and enhances transcriptional activity. Social isolation stress as well as TNF-alpha also induce the phosphorylation of ATF7. Phosphorylated in proliferating colonic and small intestinal epithelial cells. Post-translationally, sumoylation delays nuclear localization and inhibits transactivation activity through preventing binding to TAF12. RANBP2 appears to be the specific E3 ligase.

The protein resides in the nucleus. The protein localises to the nucleoplasm. It is found in the chromosome. It localises to the telomere. Functionally, stress-responsive chromatin regulator that plays a role in various biological processes including innate immunological memory, adipocyte differentiation or telomerase regulation. In absence of stress, contributes to the formation of heterochromatin and heterochromatin-like structure by recruiting histone H3K9 tri- and di-methyltransferases thus silencing the transcription of target genes such as Htr5b, STAT1 in adipocytes, or genes involved in innate immunity in macrophages and adipocytes. Phosphorylation of ATF7 disrupts interactions with histone methyltransferase and enhances the association with coactivators containing histone acetyltransferase and/or histone demethylase, leading to disruption of the heterochromatin-like structure and subsequently transcriptional activation. In response to TNF-alpha, which is induced by various stresses, phosphorylated ATF7 and telomerase are released from telomeres leading to telomere shortening. Also plays a role in maintaining epithelial regenerative capacity and protecting against cell death during intestinal epithelial damage and repair. This chain is Cyclic AMP-dependent transcription factor ATF-7 (Atf7), found in Mus musculus (Mouse).